Here is a 388-residue protein sequence, read N- to C-terminus: Probable proton-coupled zinc antiporter SLC30A3 (388 aa).

Residues 1–41 form a disordered region; it reads MEPSLATGGSETTRLVSARDRSSAGGGLRLKSLFTEPSEPL. Residues 1 to 75 lie on the Cytoplasmic side of the membrane; the sequence is MEPSLATGGS…SPERVQARRQ (75 aa). 2 positions are modified to phosphoserine: S63 and S66. The chain crosses the membrane as a helical span at residues 76–96; it reads LYAACAVCFIFMAGEVVGGYL. Topologically, residues 97–105 are lumenal; it reads AHSLAIMTD. A helical transmembrane segment spans residues 106–126; it reads AAHLLADIGSMLASLFSLWLS. Residues H108 and D112 each coordinate Zn(2+). At 127 to 145 the chain is on the cytoplasmic side; that stretch reads TRPATRTMTFGWHRSETLG. A helical transmembrane segment spans residues 146–166; it reads ALASVVSLWIVTGILLYLAFL. Residues 167-177 are Lumenal-facing; the sequence is RLLHSDYHIEA. The helical transmembrane segment at 178–198 threads the bilayer; it reads GAMLLTASIAVCANLLMAFVL. Residues 199–235 are Cytoplasmic-facing; that stretch reads HQTGAPHSHGSTGAEYAPLEEGHGYPMSLGNTSVRAA. The helical transmembrane segment at 236–256 threads the bilayer; the sequence is FVHVLGDLLQSFGVLAASILI. Residues H238 and D242 each contribute to the Zn(2+) site. Residues 257-263 lie on the Lumenal side of the membrane; it reads YFKPQYK. The helical transmembrane segment at 264–284 threads the bilayer; sequence VADPISTFLFSICALGSTAPT. Residues 285–388 lie on the Cytoplasmic side of the membrane; sequence LRDVLLVLME…CLRCQEPSQA (104 aa).

It belongs to the cation diffusion facilitator (CDF) transporter (TC 2.A.4) family. SLC30A subfamily. Homodimer. Homodimerization is negligible compared to the human protein. It could explain the lower efficiency of zinc transport. Interacts with TMEM163. In terms of tissue distribution, expression is restricted to brain (at protein level). In the brain, most abundant in hippocampus and cerebral cortex. The mRNA is also detected in testis, expression being restricted to germ cells and highest in pachytene spermatocytes and round spermatids.

Its subcellular location is the cytoplasmic vesicle. The protein localises to the secretory vesicle. It localises to the synaptic vesicle membrane. It is found in the synapse. The protein resides in the synaptosome. Its subcellular location is the late endosome membrane. The protein localises to the lysosome membrane. The enzyme catalyses Zn(2+)(in) + 2 H(+)(out) = Zn(2+)(out) + 2 H(+)(in). Probable proton-coupled zinc ion antiporter mediating the import of zinc from cytoplasm into synaptic vesicles and participating to cellular zinc ion homeostasis in the brain. This is Probable proton-coupled zinc antiporter SLC30A3 from Mus musculus (Mouse).